We begin with the raw amino-acid sequence, 71 residues long: Prokaryotic ubiquitin-like protein Pup (71 aa).

Residues 1-18 show a composition bias toward low complexity; that stretch reads MATRDSGGQSQTGRSQQG. Positions 1–42 are disordered; that stretch reads MATRDSGGQSQTGRSQQGEEIEDVTTEASPEVAERHAEITED. Residues 27–65 are ARC ATPase binding; that stretch reads EASPEVAERHAEITEDVDDLLDEIDSVLEENAEEFVRGY. Residues 31–60 adopt a coiled-coil conformation; it reads EVAERHAEITEDVDDLLDEIDSVLEENAEE. An Isoglutamyl lysine isopeptide (Glu-Lys) (interchain with K-? in acceptor proteins) cross-link involves residue glutamate 71.

This sequence belongs to the prokaryotic ubiquitin-like protein family. Strongly interacts with the proteasome-associated ATPase ARC through a hydrophobic interface; the interacting region of Pup lies in its C-terminal half. There is one Pup binding site per ARC hexamer ring.

It participates in protein degradation; proteasomal Pup-dependent pathway. Functionally, protein modifier that is covalently attached to lysine residues of substrate proteins, thereby targeting them for proteasomal degradation. The tagging system is termed pupylation. This Salinispora arenicola (strain CNS-205) protein is Prokaryotic ubiquitin-like protein Pup.